We begin with the raw amino-acid sequence, 366 residues long: Alanine racemase (366 aa).

K40 (proton acceptor; specific for D-alanine) is an active-site residue. K40 carries the N6-(pyridoxal phosphate)lysine modification. Residue R136 participates in substrate binding. Y263 functions as the Proton acceptor; specific for L-alanine in the catalytic mechanism. M310 is a binding site for substrate.

It belongs to the alanine racemase family. The cofactor is pyridoxal 5'-phosphate.

It carries out the reaction L-alanine = D-alanine. It functions in the pathway amino-acid biosynthesis; D-alanine biosynthesis; D-alanine from L-alanine: step 1/1. In terms of biological role, catalyzes the interconversion of L-alanine and D-alanine. May also act on other amino acids. In Streptococcus pyogenes serotype M1, this protein is Alanine racemase (alr).